The primary structure comprises 98 residues: NADH-ubiquinone oxidoreductase chain 4L (98 aa).

3 helical membrane passes run 1–21 (MSMV…GLLM), 29–49 (SLLC…VTIL), and 61–81 (IILL…LVMV).

The protein belongs to the complex I subunit 4L family. As to quaternary structure, core subunit of respiratory chain NADH dehydrogenase (Complex I) which is composed of 45 different subunits.

Its subcellular location is the mitochondrion inner membrane. It catalyses the reaction a ubiquinone + NADH + 5 H(+)(in) = a ubiquinol + NAD(+) + 4 H(+)(out). Functionally, core subunit of the mitochondrial membrane respiratory chain NADH dehydrogenase (Complex I) which catalyzes electron transfer from NADH through the respiratory chain, using ubiquinone as an electron acceptor. Part of the enzyme membrane arm which is embedded in the lipid bilayer and involved in proton translocation. This chain is NADH-ubiquinone oxidoreductase chain 4L (MT-ND4L), found in Erignathus barbatus (Bearded seal).